Consider the following 372-residue polypeptide: Mitogen-activated protein kinase kinase kinase 17 (372 aa).

In terms of domain architecture, Protein kinase spans 3-259 (WTRGRILGRG…ATQLLNHPFL (257 aa)). ATP-binding positions include 9 to 17 (LGRGSTATV) and K32. Catalysis depends on D126, which acts as the Proton acceptor. Residue S312 is modified to Phosphoserine.

Belongs to the protein kinase superfamily. Ser/Thr protein kinase family. In terms of assembly, binds to MKK3.

It localises to the nucleus. It catalyses the reaction L-seryl-[protein] + ATP = O-phospho-L-seryl-[protein] + ADP + H(+). It carries out the reaction L-threonyl-[protein] + ATP = O-phospho-L-threonyl-[protein] + ADP + H(+). In terms of biological role, component of the abscisic acid (ABA) signaling pathway that may act as ABA signal transducer in the context of abiotic stresses. Triggers MPK7 activation in a MKK3-dependent manner. Mediates the ABA-dependent activation of the MKK3-MPK7 module. This Arabidopsis thaliana (Mouse-ear cress) protein is Mitogen-activated protein kinase kinase kinase 17.